The sequence spans 134 residues: Small ribosomal subunit protein uS9 (134 aa).

The interval 109-134 (DARRTEPHKPSKSSKGPRAKRQKSYR) is disordered. Basic residues predominate over residues 118 to 134 (PSKSSKGPRAKRQKSYR).

The protein belongs to the universal ribosomal protein uS9 family.

The chain is Small ribosomal subunit protein uS9 from Methanococcus maripaludis (strain C7 / ATCC BAA-1331).